The following is a 362-amino-acid chain: MLCVNVELRERSYPIHIGMGLLSEPQVYPLKKGDKVMIVTNPTVAQYYLSSITDTLEKIGCSVENVQLPEGEQYKTLESLDLIFTALLKANHGRDTSIIALGGGVIGDIAGYAAASYQRGVRFIQIPTTLLAQVDSSVGGKTAVNHKLGKNMIGAFYQPCAVIIDTLTLTTLPKREIHAGLAEVIKYGAILDDEFFTWLEKHITNLVALEQQYLQQCIARCCQIKADVVTRDETEKGERALLNLGHTFGHAIETHLGYGNWLHGEAVATGMMIAAVLSNKLGDLSLNDVTRLEKLLTQADLPTASPDTMKAEDYLPHMMRDKKVLAGKLRLVLLKSLGQAYVATDTDKEYVLDAIRTCSKKS.

NAD(+)-binding positions include 70–75 (EGEQYK), 104–108 (GVIGD), 128–129 (TT), Lys141, Lys150, and 168–171 (TLTT). Positions 183, 246, and 263 each coordinate Zn(2+).

The protein belongs to the sugar phosphate cyclases superfamily. Dehydroquinate synthase family. It depends on Co(2+) as a cofactor. The cofactor is Zn(2+). NAD(+) serves as cofactor.

It is found in the cytoplasm. It catalyses the reaction 7-phospho-2-dehydro-3-deoxy-D-arabino-heptonate = 3-dehydroquinate + phosphate. Its pathway is metabolic intermediate biosynthesis; chorismate biosynthesis; chorismate from D-erythrose 4-phosphate and phosphoenolpyruvate: step 2/7. Catalyzes the conversion of 3-deoxy-D-arabino-heptulosonate 7-phosphate (DAHP) to dehydroquinate (DHQ). This is 3-dehydroquinate synthase from Histophilus somni (strain 2336) (Haemophilus somnus).